The sequence spans 216 residues: Ribonuclease T (216 aa).

Positions 28–202 constitute an Exonuclease domain; sequence VVVDVETGGF…YDTEQTARLF (175 aa). The Mg(2+) site is built by D31, E33, H189, and D194. H189 serves as the catalytic Proton donor/acceptor.

Belongs to the RNase T family. Homodimer. Requires Mg(2+) as cofactor.

Trims short 3' overhangs of a variety of RNA species, leaving a one or two nucleotide 3' overhang. Responsible for the end-turnover of tRNA: specifically removes the terminal AMP residue from uncharged tRNA (tRNA-C-C-A). Also appears to be involved in tRNA biosynthesis. The protein is Ribonuclease T of Xanthomonas campestris pv. campestris (strain 8004).